A 79-amino-acid chain; its full sequence is Hematopoietic cell signal transducer (79 aa).

Residues 1-18 form the signal peptide; sequence MIHPGHILFLLLLPVAAA. At 19–34 the chain is on the extracellular side; the sequence is QTTPGSCSGCGSLSLP. The chain crosses the membrane as a helical span at residues 35-55; sequence LLAGLVAADAVASPLIVGAVF. Residues 56–79 are Cytoplasmic-facing; it reads LCARPRRSPAQGDGKVYINMPGRG. Tyr-72 bears the Phosphotyrosine mark. The GRB2 binding site stretch occupies residues 72–74; sequence YIN. The segment at 72–75 is PIK3R1 binding site; sequence YINM.

This sequence belongs to the DAP10 family. Homodimer; Disulfide-linked. Heterohexamer composed of four subunits of HCST/DAP10 and two subunits of KLRK1. Interacts (via transmembrane domain) with KLRK1 (via transmembrane domain); the interaction is required for KLRK1 NK cell surface and induces NK cell-mediated cytotoxicity. Interacts with PIK3R1 and GRB2. Interacts with CLEC5A. Forms an CLEC5A/TYROBP/HCST trimolecular complex depending almost solely on TYROBP. Interacts with CD300H. Post-translationally, phosphorylated; PIK3R1 and GRB2 associate specifically with tyrosine-phosphorylated HCST. In terms of processing, O-glycosylated.

It localises to the membrane. In terms of biological role, transmembrane adapter protein which associates with KLRK1 to form an activation receptor KLRK1-HCST in lymphoid and myeloid cells; this receptor plays a major role in triggering cytotoxicity against target cells expressing cell surface ligands such as MHC class I chain-related MICA and MICB, and UL16-binding proteins (ULBPs); these ligands are up-regulated by stress conditions and pathological state such as viral infection and tumor transformation. Functions as a docking site for PI3-kinase PIK3R1 and GRB2. Interaction of ULBPs with KLRK1-HCST triggers calcium mobilization and activation of the PIK3R1, MAP2K/ERK, and JAK2/STAT5 signaling pathways. Both PIK3R1 and GRB2 are required for full KLRK1-HCST-mediated activation and ultimate killing of target cells. In NK cells, KLRK1-HCST signaling directly induces cytotoxicity and enhances cytokine production initiated via DAP12/TYROBP-associated receptors. In T-cells, it provides primarily costimulation for TCR-induced signals. KLRK1-HCST receptor plays a role in immune surveillance against tumors and is required for cytolysis of tumors cells; indeed, melanoma cells that do not express KLRK1 ligands escape from immune surveillance mediated by NK cells. This chain is Hematopoietic cell signal transducer (HCST), found in Macaca mulatta (Rhesus macaque).